The following is a 205-amino-acid chain: ATP synthase subunit b 1 (205 aa).

A compositionally biased stretch (polar residues) spans 1–15 (MFVSTAFAQTATESQ). The interval 1–26 (MFVSTAFAQTATESQPAPAAGEHGAA) is disordered. The span at 16–26 (PAPAAGEHGAA) shows a compositional bias: low complexity. The helical transmembrane segment at 56–78 (SQILWLAITFGLFYLFMSRVVLP) threads the bilayer.

This sequence belongs to the ATPase B chain family. F-type ATPases have 2 components, F(1) - the catalytic core - and F(0) - the membrane proton channel. F(1) has five subunits: alpha(3), beta(3), gamma(1), delta(1), epsilon(1). F(0) has three main subunits: a(1), b(2) and c(10-14). The alpha and beta chains form an alternating ring which encloses part of the gamma chain. F(1) is attached to F(0) by a central stalk formed by the gamma and epsilon chains, while a peripheral stalk is formed by the delta and b chains.

The protein resides in the cell inner membrane. Its function is as follows. F(1)F(0) ATP synthase produces ATP from ADP in the presence of a proton or sodium gradient. F-type ATPases consist of two structural domains, F(1) containing the extramembraneous catalytic core and F(0) containing the membrane proton channel, linked together by a central stalk and a peripheral stalk. During catalysis, ATP synthesis in the catalytic domain of F(1) is coupled via a rotary mechanism of the central stalk subunits to proton translocation. Functionally, component of the F(0) channel, it forms part of the peripheral stalk, linking F(1) to F(0). This chain is ATP synthase subunit b 1, found in Brucella anthropi (strain ATCC 49188 / DSM 6882 / CCUG 24695 / JCM 21032 / LMG 3331 / NBRC 15819 / NCTC 12168 / Alc 37) (Ochrobactrum anthropi).